The chain runs to 470 residues: Cell division protein FtsP (470 aa).

The segment at residues 1–29 (MKNCSRRQLLKTTLFSTALFSVPAPLLAA) is a signal peptide (tat-type signal).

Belongs to the FtsP family. Post-translationally, predicted to be exported by the Tat system. The position of the signal peptide cleavage has not been experimentally proven.

It is found in the periplasm. In terms of biological role, cell division protein that is required for growth during stress conditions. May be involved in protecting or stabilizing the divisomal assembly under conditions of stress. This chain is Cell division protein FtsP, found in Aggregatibacter aphrophilus (strain NJ8700) (Haemophilus aphrophilus).